The following is a 55-amino-acid chain: MYNPPAQQDMSYYDHCTKRHEEKGCLYACIFTALCCFCCYETCECCLDCLCCCCN.

A helical membrane pass occupies residues 24-40; sequence GCLYACIFTALCCFCCY.

It belongs to the CYSTM1 family. In terms of tissue distribution, expressed only in roots.

It localises to the cell membrane. The protein localises to the secreted. Its subcellular location is the cell wall. In terms of biological role, confers resistance to heavy metal ions (e.g. cadmium (CdCl(2)) and copper (CuCl(2))) by chelating them at the plasma membrane of root cells, thus stopping their entry and reducing their accumulation. The chain is Protein CADMIUM TOLERANCE 2 from Oryza sativa subsp. japonica (Rice).